Reading from the N-terminus, the 181-residue chain is Iron sulfur cluster assembly protein 1, mitochondrial (181 aa).

Residues 159–181 (RKTKNPTLGAEAAETPAAATATA) form a disordered region. Low complexity predominate over residues 168-181 (AEAAETPAAATATA).

This sequence belongs to the NifU family. In terms of assembly, component of the core Fe-S cluster (ISC) assembly machinery. It depends on [2Fe-2S] cluster as a cofactor.

The protein resides in the mitochondrion matrix. It participates in cofactor biosynthesis; iron-sulfur cluster biosynthesis. Functionally, scaffold protein for the de novo synthesis of iron-sulfur (Fe-S) clusters within mitochondria, which is required for maturation of both mitochondrial and cytoplasmic [2Fe-2S] and [4Fe-4S] proteins. First, a [2Fe-2S] cluster is transiently assembled on the scaffold protein ISU1. In a second step, the cluster is released from ISU1, transferred to a glutaredoxin, followed by the formation of mitochondrial [2Fe-2S] proteins, the synthesis of [4Fe-4S] clusters and their target-specific insertion into the recipient apoproteins. Cluster assembly on ISU1 depends on the function of the cysteine desulfurase complex NFS1-ISD11, which serves as the sulfur donor for cluster synthesis, the iron-binding protein frataxin as the putative iron donor, and the electron transfer chain comprised of ferredoxin reductase and ferredoxin, which receive their electrons from NADH. The sequence is that of Iron sulfur cluster assembly protein 1, mitochondrial (ISU1) from Yarrowia lipolytica (strain CLIB 122 / E 150) (Yeast).